Reading from the N-terminus, the 475-residue chain is Argininosuccinate lyase (475 aa).

This sequence belongs to the lyase 1 family. Argininosuccinate lyase subfamily.

It localises to the cytoplasm. It catalyses the reaction 2-(N(omega)-L-arginino)succinate = fumarate + L-arginine. The protein operates within amino-acid biosynthesis; L-arginine biosynthesis; L-arginine from L-ornithine and carbamoyl phosphate: step 3/3. This chain is Argininosuccinate lyase, found in Streptomyces griseus subsp. griseus (strain JCM 4626 / CBS 651.72 / NBRC 13350 / KCC S-0626 / ISP 5235).